A 249-amino-acid chain; its full sequence is Diaminopimelate epimerase (249 aa).

Residues Asn11 and Asn60 each contribute to the substrate site. Cys69 (proton donor) is an active-site residue. Residues 70 to 71 (GN), Asn164, and 182 to 183 (ER) contribute to the substrate site. Cys192 acts as the Proton acceptor in catalysis. 193–194 (GT) provides a ligand contact to substrate.

Belongs to the diaminopimelate epimerase family. As to quaternary structure, homodimer.

The protein localises to the cytoplasm. The catalysed reaction is (2S,6S)-2,6-diaminopimelate = meso-2,6-diaminopimelate. The protein operates within amino-acid biosynthesis; L-lysine biosynthesis via DAP pathway; DL-2,6-diaminopimelate from LL-2,6-diaminopimelate: step 1/1. Functionally, catalyzes the stereoinversion of LL-2,6-diaminopimelate (L,L-DAP) to meso-diaminopimelate (meso-DAP), a precursor of L-lysine and an essential component of the bacterial peptidoglycan. The protein is Diaminopimelate epimerase of Campylobacter jejuni (strain RM1221).